A 146-amino-acid polypeptide reads, in one-letter code: Large ribosomal subunit protein uL15 (146 aa).

A compositionally biased stretch (basic and acidic residues) spans 1–18 (MKLHELKPAEGSRKERNR). Residues 1–54 (MKLHELKPAEGSRKERNRVGRGVATGNGKTSGRGHKGQKARSGGGVRPGFEGGQ) are disordered. A compositionally biased stretch (gly residues) spans 42-52 (SGGGVRPGFEG).

Belongs to the universal ribosomal protein uL15 family. As to quaternary structure, part of the 50S ribosomal subunit.

In terms of biological role, binds to the 23S rRNA. In Staphylococcus aureus (strain Mu3 / ATCC 700698), this protein is Large ribosomal subunit protein uL15.